The chain runs to 388 residues: Na(+)/H(+) antiporter NhaA (388 aa).

Over 1 to 11 (MKHLHRFFSSD) the chain is Cytoplasmic. The chain crosses the membrane as a helical span at residues 12–31 (ASGGIILIIAAVLAMIMANS). The Periplasmic segment spans residues 32-58 (GATSGWYHDFLETPVQLRVGTLEINKN). The helical transmembrane segment at 59 to 80 (MLLWINDALMAVFFLLVGLEVK) threads the bilayer. Residues 81–96 (RELMQGSLASLRQAAF) are Cytoplasmic-facing. Residues 97-116 (PVIAAIGGMIVPALLYLAFN) traverse the membrane as a helical segment. The Periplasmic segment spans residues 117–122 (YADPIT). Residues 123–130 (REGWAIPA) form a helical membrane-spanning segment. At 131 to 154 (ATDIAFALGVLALLGSRVPLALKI) the chain is on the cytoplasmic side. A helical transmembrane segment spans residues 155–176 (FLMALAIIDDLGAIIIIALFYT). At 177-180 (NDLS) the chain is on the periplasmic side. The chain crosses the membrane as a helical span at residues 181–200 (MASLGVAAVAIAVLAVLNLC). Residues 201 to 204 (GVRR) lie on the Cytoplasmic side of the membrane. Residues 205–222 (TGVYILVGVVLWTAVLKS) traverse the membrane as a helical segment. Gly223 is a topological domain (periplasmic). A helical membrane pass occupies residues 224–236 (VHATLAGVIVGFF). Residues 237–253 (IPLKEKHGRSPAKRLEH) lie on the Cytoplasmic side of the membrane. The chain crosses the membrane as a helical span at residues 254–272 (VLHPWVAYLILPLFAFANA). Topologically, residues 273–286 (GVSLQGVTLEGLTS) are periplasmic. The chain crosses the membrane as a helical span at residues 287–310 (ILPLGIIAGLLIGKPLGISLFCWL). Over 311–339 (ALRLKLAHLPEGTTYQQIMAVGILCGIGF) the chain is Cytoplasmic. Residues 340–350 (TMSIFIASLAF) form a helical membrane-spanning segment. Topologically, residues 351 to 357 (GSVDPEL) are periplasmic. Residues 358–380 (INWAKLGILVGSISSAVIGYSWL) form a helical membrane-spanning segment. Residues 381–388 (RVRLRPSV) are Cytoplasmic-facing.

This sequence belongs to the NhaA Na(+)/H(+) (TC 2.A.33) antiporter family.

Its subcellular location is the cell inner membrane. The catalysed reaction is Na(+)(in) + 2 H(+)(out) = Na(+)(out) + 2 H(+)(in). Functionally, na(+)/H(+) antiporter that extrudes sodium in exchange for external protons. The protein is Na(+)/H(+) antiporter NhaA of Escherichia coli O6:K15:H31 (strain 536 / UPEC).